A 475-amino-acid chain; its full sequence is Protein translocase subunit SecD (475 aa).

6 helical membrane-spanning segments follow: residues 7 to 27 (LLITVTLLAFSVWALWPSLKF), 313 to 333 (KGFMSSLIGIVLVFLFMFIYY), 338 to 358 (LIADVALSLNLIILMAIMAYL), 364 to 384 (LPGVAGIALTLAMSVDANVLI), 410 to 430 (FWTIFDANFTTLIAALFLFQF), and 437 to 457 (GFAVTLSIGLIVSMFTAVTVT).

It belongs to the SecD/SecF family. SecD subfamily. In terms of assembly, forms a complex with SecF. Part of the essential Sec protein translocation apparatus which comprises SecA, SecYEG and auxiliary proteins SecDF. Other proteins may also be involved.

It localises to the cell inner membrane. Functionally, part of the Sec protein translocase complex. Interacts with the SecYEG preprotein conducting channel. SecDF uses the proton motive force (PMF) to complete protein translocation after the ATP-dependent function of SecA. This chain is Protein translocase subunit SecD, found in Endomicrobium trichonymphae.